The primary structure comprises 551 residues: Transcription factor 7-like 1-B (551 aa).

Residues 1 to 11 (MPQLNSGGGDE) show a composition bias toward gly residues. Residues 1-61 (MPQLNSGGGD…SENHSSDSDS (61 aa)) are interaction with CTNNB1-A. Disordered stretches follow at residues 1-77 (MPQL…EKPR), 183-213 (GTPP…PYYP), 391-474 (WSAR…SLTT), and 492-515 (SPSS…SRPI). Basic and acidic residues-rich tracts occupy residues 17 to 32 (ELIR…EKSP) and 52 to 77 (SENH…EKPR). The interaction with AES and TLE4-A stretch occupies residues 109–312 (LGGHYLPNGA…SPNLSTKSNV (204 aa)). A DNA-binding region (HMG box) is located at residues 324–392 (IKKPLNAFML…LHSQLYPSWS (69 aa)). Basic and acidic residues predominate over residues 407–416 (KQSPEMENYT). Residues 408-551 (QSPEMENYTK…PLSLVTRSSD (144 aa)) are interaction with CTBP-B. Residues 445 to 464 (SPATPSAALASPAAPAATHS) show a composition bias toward low complexity. Over residues 465–474 (EQAQPLSLTT) the composition is skewed to polar residues.

The protein belongs to the TCF/LEF family. As to quaternary structure, interacts with csnk1e, ctnnb1-A, ctbp-B, dact1-A and gsk3b. May interact with ase and tle4-A. Interacts with tle1-B. Post-translationally, phosphorylated. Phosphorylation by csnk1e promotes binding to ctnnb1-A while phosphorylation by gsk3b may reverse this effect.

It localises to the nucleus. Functionally, participates in the Wnt signaling pathway. Binds to DNA and acts as a repressor in the absence of ctnnb1-A and possibly ctnnb1-B, and as an activator in the presence of these proteins. Required early in development for the establishment of the dorsal body axis in response to maternal Wnt signaling. In Xenopus laevis (African clawed frog), this protein is Transcription factor 7-like 1-B (tcf7l1-b).